The following is an 80-amino-acid chain: DNA-directed RNA polymerase RPB10 homolog (80 aa).

Zn(2+) contacts are provided by Cys7, Cys10, Cys65, and Cys66.

This sequence belongs to the archaeal RpoN/eukaryotic RPB10 RNA polymerase subunit family. Part of the viral DNA-directed RNA polymerase that consists of 8 polII-like subunits (RPB1, RPB2, RPB3, RPB5, RPB6, RPB7, RPB9, RPB10), a capping enzyme and a termination factor.

The protein resides in the host cytoplasm. Functionally, component of the DNA-directed RNA polymerase (RNAP) that catalyzes the transcription in the cytoplasm of viral DNA into RNA using the four ribonucleoside triphosphates as substrates. This chain is DNA-directed RNA polymerase RPB10 homolog, found in African swine fever virus (strain Badajoz 1971 Vero-adapted) (Ba71V).